A 199-amino-acid polypeptide reads, in one-letter code: Phosphatidylethanolamine N-methyltransferase (199 aa).

The Lumenal segment spans residues 1-12 (MSWLLGYMDPTE). Positions 13 to 33 (PSFVAAVITIVFNPLFWNVVA) form an intramembrane region, helical. The Lumenal portion of the chain corresponds to 34-45 (RWEQRTRKLSRA). The chain crosses the membrane as a helical span at residues 46 to 66 (FGSPHLACYSLGICILLLNIL). At 67 to 93 (RSHCFTQAMMSQPKMEGLDNHTTYFLG) the chain is on the cytoplasmic side. A helical membrane pass occupies residues 94 to 114 (LAFLGWGFVFVLSSFYALGFT). Residue 98–100 (GWG) participates in S-adenosyl-L-methionine binding. Topologically, residues 115-157 (GTFLGDYFGILKESRVTTFPFSVLDNPMYWGSTANYLGWALMH) are lumenal. The helical transmembrane segment at 158 to 178 (ASPTGLLLTVLVAIVYVVALL) threads the bilayer. Residues 179 to 199 (YEEPFTAEIYRQKATRLHKRS) lie on the Cytoplasmic side of the membrane. Position 180 to 181 (180 to 181 (EE)) interacts with S-adenosyl-L-methionine.

Belongs to the class VI-like SAM-binding methyltransferase superfamily. PEMT/PEM2 methyltransferase family. Expressed in liver (at protein level).

The protein resides in the endoplasmic reticulum membrane. The protein localises to the mitochondrion membrane. The catalysed reaction is a 1,2-diacyl-sn-glycero-3-phospho-N-methylethanolamine + S-adenosyl-L-methionine = a 1,2-diacyl-sn-glycero-3-phospho-N,N-dimethylethanolamine + S-adenosyl-L-homocysteine + H(+). It carries out the reaction a 1,2-diacyl-sn-glycero-3-phospho-N,N-dimethylethanolamine + S-adenosyl-L-methionine = a 1,2-diacyl-sn-glycero-3-phosphocholine + S-adenosyl-L-homocysteine + H(+). It catalyses the reaction a 1,2-diacyl-sn-glycero-3-phosphoethanolamine + S-adenosyl-L-methionine = a 1,2-diacyl-sn-glycero-3-phospho-N-methylethanolamine + S-adenosyl-L-homocysteine + H(+). The enzyme catalyses 1,2-di-(9Z-octadecenoyl)-sn-glycero-3-phosphoethanolamine + S-adenosyl-L-methionine = 1,2-di-(9Z-octadecenoyl)-sn-glycero-3-phospho-N-methylethanolamine + S-adenosyl-L-homocysteine + H(+). The catalysed reaction is 1,2-di-(9Z-octadecenoyl)-sn-glycero-3-phospho-N-methylethanolamine + S-adenosyl-L-methionine = 1,2-di-(9Z-octadecenoyl)-sn-glycero-3-phospho-N,N-dimethylethanolamine + S-adenosyl-L-homocysteine + H(+). It carries out the reaction 1,2-di-(9Z-octadecenoyl)-sn-glycero-3-phospho-N,N-dimethylethanolamine + S-adenosyl-L-methionine = 1,2-di-(9Z-octadecenoyl)-sn-glycero-3-phosphocholine + S-adenosyl-L-homocysteine + H(+). It catalyses the reaction 1,2-di-(9Z,12Z-octadecadienoyl)-sn-glycero-3-phosphoethanolamine + S-adenosyl-L-methionine = 1,2-di-(9Z,12Z-octadecadienoyl)-sn-glycero-3-phospho-N-methylethanolamine + S-adenosyl-L-homocysteine + H(+). The enzyme catalyses 1,2-di-(9Z,12Z-octadecadienoyl)-sn-glycero-3-phospho-N-methylethanolamine + S-adenosyl-L-methionine = 1,2-di-(9Z,12Z-octadecadienoyl)-sn-glycero-3-phospho-N,N-dimethylethanolamine + S-adenosyl-L-homocysteine + H(+). The catalysed reaction is 1,2-di-(9Z,12Z-octadecadienoyl)-sn-glycero-3-phospho-N,N-dimethylethanolamine + S-adenosyl-L-methionine = 1,2-di-(9Z,12Z-octadecadienoyl)-sn-glycero-3-phosphocholine + S-adenosyl-L-homocysteine + H(+). It carries out the reaction 1,2-di-(9Z,12Z,15Z-octadecatrienoyl)-sn-glycero-3-phosphoethanolamine + S-adenosyl-L-methionine = 1,2-di-(9Z,12Z,15Z-octadecatrienoyl)-sn-glycero-3-phospho-N-methylethanolamine + S-adenosyl-L-homocysteine + H(+). It catalyses the reaction 1,2-di-(9Z,12Z,15Z-octadecatrienoyl)-sn-glycero-3-phospho-N-methylethanolamine + S-adenosyl-L-methionine = 1,2-di-(9Z,12Z,15Z-octadecatrienoyl)-sn-glycero-3-phospho-N,N-dimethylethanolamine + S-adenosyl-L-homocysteine + H(+). The enzyme catalyses 1,2-di-(9Z,12Z,15Z-octadecatrienoyl)-sn-glycero-3-phospho-N,N-dimethylethanolamine + S-adenosyl-L-methionine = 1,2-di-(9Z,12Z,15Z-octadecatrienoyl)-sn-glycero-3-phosphocholine + S-adenosyl-L-homocysteine + H(+). The catalysed reaction is 1-hexadecanoyl-2-(4Z,7Z,10Z,13Z,16Z,19Z-docosahexaenoyl)-sn-glycero-3-phosphoethanolamine + S-adenosyl-L-methionine = 1-hexadecanoyl-2-(4Z,7Z,10Z,13Z,16Z,19Z-docosahexaenoyl)-sn-glycero-3-phospho-N-methylethanolamine + S-adenosyl-L-homocysteine + H(+). It carries out the reaction 1-hexadecanoyl-2-(4Z,7Z,10Z,13Z,16Z,19Z-docosahexaenoyl)-sn-glycero-3-phospho-N-methylethanolamine + S-adenosyl-L-methionine = 1-hexadecanoyl-2-(4Z,7Z,10Z,13Z,16Z,19Z-docosahexaenoyl)-sn-glycero-3-phospho-N,N-dimethylethanolamine + S-adenosyl-L-homocysteine + H(+). It catalyses the reaction 1-hexadecanoyl-2-(4Z,7Z,10Z,13Z,16Z,19Z-docosahexaenoyl)-sn-glycero-3-phospho-N,N-dimethylethanolamine + S-adenosyl-L-methionine = 1-hexadecanoyl-2-(4Z,7Z,10Z,13Z,16Z,19Z-docosahexaenoyl)-sn-glycero-3-phosphocholine + S-adenosyl-L-homocysteine + H(+). It functions in the pathway phospholipid metabolism; phosphatidylcholine biosynthesis. Catalyzes the three sequential steps of the methylation pathway for the biosynthesis of phosphatidylcholine, a critical and essential component for membrane structure. Uses S-adenosylmethionine (S-adenosyl-L-methionine, SAM or AdoMet) as the methyl group donor for the methylation of phosphatidylethanolamine (1,2-diacyl-sn-glycero-3-phosphoethanolamine, PE) to phosphatidylmonomethylethanolamine (1,2-diacyl-sn-glycero-3-phospho-N-methylethanolamine, PMME), PMME to phosphatidyldimethylethanolamine (1,2-diacyl-sn-glycero-3-phospho-N,N-dimethylethanolamine, PDME), and PDME to phosphatidylcholine (1,2-diacyl-sn-glycero-3-phosphocholine, PC), producing S-adenosyl-L-homocysteine in each step. In Mus musculus (Mouse), this protein is Phosphatidylethanolamine N-methyltransferase.